A 117-amino-acid polypeptide reads, in one-letter code: Large ribosomal subunit protein bL19 (117 aa).

Belongs to the bacterial ribosomal protein bL19 family.

Functionally, this protein is located at the 30S-50S ribosomal subunit interface and may play a role in the structure and function of the aminoacyl-tRNA binding site. The protein is Large ribosomal subunit protein bL19 of Blochmanniella floridana.